A 414-amino-acid polypeptide reads, in one-letter code: 11-beta-hydroxysteroid dehydrogenase type 2 (414 aa).

The next 4 helical transmembrane spans lie at 3–23 (DFAV…GGAV), 26–46 (FLAF…ATLL), 52–72 (ALCM…WLYF), and 341–361 (YYAG…PLSI). Residues 382 to 414 (KQQGLSPNDNNNSIKENMNDSSSNNSNFTKCID) are disordered. Polar residues predominate over residues 384–397 (QGLSPNDNNNSIKE).

This sequence belongs to the short-chain dehydrogenases/reductases (SDR) family. In terms of tissue distribution, broadly expressed in peripheral (brain, gill, eye, heart, liver, head kidney, posterior kidney, and gut).

It is found in the membrane. It carries out the reaction an 11beta-hydroxysteroid + NAD(+) = an 11-oxosteroid + NADH + H(+). The enzyme catalyses cortisol + NAD(+) = cortisone + NADH + H(+). It catalyses the reaction corticosterone + NAD(+) = 11-dehydrocorticosterone + NADH + H(+). The catalysed reaction is 11beta,17beta-dihydroxyandrost-4-ene-3-one + NAD(+) = 17beta-hydroxyandrost-4-ene-3,11-dione + NADH + H(+). It carries out the reaction 11beta-hydroxyandrost-4-ene-3,17-dione + NAD(+) = androst-4-ene-3,11,17-trione + NADH + H(+). It participates in steroid metabolism. Its function is as follows. Catalyzes the conversion of biologically active 11beta-hydroxyglucocorticoids (11beta-hydroxysteroid) such as cortisol, to inactive 11-ketoglucocorticoids (11-oxosteroid) such as cortisone, in the presence of NAD(+). Cortisol is the primary glucocorticoid in teleosts and is released to increase glucose bioavailability in order to meet the increased energy demands in response to stress. Functions as a dehydrogenase (oxidase), thereby decreasing the concentration of active glucocorticoids, regulating the hypothalamus-pituitary-interrenal (HPI) axis function in adult fish. Decreasing the excess glucocorticoids may be of relevance to brain function and neural proliferation. Plays a key role by catalyzing the oxidation of 11beta-hydroxytestosterone (11beta,17beta-dihydroxyandrost-4-ene-3-one) to 11-ketotestosterone (17beta-hydroxyandrost-4-ene-3,11-dione), the major fish androgen, that activates androgen receptor transcriptional activity. Catalyzes the conversion of 11beta-hydroxyandrostenedione (11beta-hydroxyandrost-4-ene-3,17-dione) to 11-ketoandrostenedione (androst-4-ene-3,11,17-trione), which can be further metabolized to 11-ketotestosterone. Exerts a dual role in fish by inactivating glucocorticoids and activating androgens. The sequence is that of 11-beta-hydroxysteroid dehydrogenase type 2 (hsd11b2) from Danio rerio (Zebrafish).